The chain runs to 118 residues: Large ribosomal subunit protein bL20 (118 aa).

The protein belongs to the bacterial ribosomal protein bL20 family.

In terms of biological role, binds directly to 23S ribosomal RNA and is necessary for the in vitro assembly process of the 50S ribosomal subunit. It is not involved in the protein synthesizing functions of that subunit. This is Large ribosomal subunit protein bL20 from Staphylococcus epidermidis (strain ATCC 35984 / DSM 28319 / BCRC 17069 / CCUG 31568 / BM 3577 / RP62A).